We begin with the raw amino-acid sequence, 426 residues long: uncharacterized protein (426 aa).

The protein belongs to the serpin family.

This is an uncharacterized protein from Methanosarcina mazei (strain ATCC BAA-159 / DSM 3647 / Goe1 / Go1 / JCM 11833 / OCM 88) (Methanosarcina frisia).